Reading from the N-terminus, the 374-residue chain is Large ribosomal subunit protein uL4 (374 aa).

Positions 336 to 355 are disordered; it reads EKAMAKGMQNKKNREARHAA.

The protein belongs to the universal ribosomal protein uL4 family.

This is Large ribosomal subunit protein uL4 (RPL4) from Trypanosoma brucei brucei.